Here is a 229-residue protein sequence, read N- to C-terminus: MDNKGWSLKGSLLPLLLLVSDLLLCQGVTSLPICPTGAVNCQVSLRDLFDRAVILSHYIHNLSSEMFNEFDKRYAQGRGFITKAINSCHTSSLSTPEDKEQAQQIHHEDLLNLILRVLRSWNDPLYHLVSEVRGMQEAPDSILSRAIEIEEQNRRLLEGMEKIVGQVHPGVRENEVYSVWSGLPSLQMADEDSRLFAFYNLLHCLRRDSHKIDNYLKLLKCRIVYDSNC.

An N-terminal signal peptide occupies residues 1–30 (MDNKGWSLKGSLLPLLLLVSDLLLCQGVTS). Residues cysteine 34 and cysteine 41 are joined by a disulfide bond. Serine 56, serine 64, and serine 120 each carry phosphoserine. 2 cysteine pairs are disulfide-bonded: cysteine 88-cysteine 204 and cysteine 221-cysteine 229.

Belongs to the somatotropin/prolactin family. As to quaternary structure, interacts with PRLR.

The protein localises to the secreted. Functionally, prolactin acts primarily on the mammary gland by promoting lactation. In Neovison vison (American mink), this protein is Prolactin (PRL).